Here is a 471-residue protein sequence, read N- to C-terminus: Probable nucleoredoxin 3 (471 aa).

Thioredoxin domains follow at residues 15–173 (VSIP…ARRQ) and 179–334 (QLLG…KERD).

It belongs to the nucleoredoxin family.

The enzyme catalyses [protein]-dithiol + NAD(+) = [protein]-disulfide + NADH + H(+). It carries out the reaction [protein]-dithiol + NADP(+) = [protein]-disulfide + NADPH + H(+). In terms of biological role, probable thiol-disulfide oxidoreductase that may participate in various redox reactions. The sequence is that of Probable nucleoredoxin 3 from Oryza sativa subsp. japonica (Rice).